Reading from the N-terminus, the 361-residue chain is Probable galacturonosyltransferase-like 5 (361 aa).

Residues 1–6 (MHWITR) lie on the Cytoplasmic side of the membrane. Residues 7–27 (FSAFFSAALAMILLSPSLQSF) form a helical; Signal-anchor for type II membrane protein membrane-spanning segment. Residues 28 to 361 (SPAAAIRSSH…APYDLYKHSH (334 aa)) lie on the Lumenal side of the membrane. Residues Asn-218 and Asn-234 are each glycosylated (N-linked (GlcNAc...) asparagine).

The protein belongs to the glycosyltransferase 8 family.

Its subcellular location is the golgi apparatus membrane. It participates in glycan metabolism; pectin biosynthesis. May be involved in pectin and/or xylans biosynthesis in cell walls. This is Probable galacturonosyltransferase-like 5 (GATL5) from Arabidopsis thaliana (Mouse-ear cress).